Here is a 1304-residue protein sequence, read N- to C-terminus: DNA-directed RNA polymerase subunit beta' (1304 aa).

4 residues coordinate Zn(2+): Cys-60, Cys-62, Cys-75, and Cys-78. Positions 541, 543, and 545 each coordinate Mg(2+). Zn(2+) contacts are provided by Cys-887, Cys-963, Cys-970, and Cys-973.

It belongs to the RNA polymerase beta' chain family. As to quaternary structure, the RNAP catalytic core consists of 2 alpha, 1 beta, 1 beta' and 1 omega subunit. When a sigma factor is associated with the core the holoenzyme is formed, which can initiate transcription. Mg(2+) serves as cofactor. Requires Zn(2+) as cofactor.

It catalyses the reaction RNA(n) + a ribonucleoside 5'-triphosphate = RNA(n+1) + diphosphate. DNA-dependent RNA polymerase catalyzes the transcription of DNA into RNA using the four ribonucleoside triphosphates as substrates. In Acidothermus cellulolyticus (strain ATCC 43068 / DSM 8971 / 11B), this protein is DNA-directed RNA polymerase subunit beta'.